The following is a 190-amino-acid chain: GTP cyclohydrolase 1 (190 aa).

Positions 75, 78, and 146 each coordinate Zn(2+).

It belongs to the GTP cyclohydrolase I family. As to quaternary structure, toroid-shaped homodecamer, composed of two pentamers of five dimers.

The catalysed reaction is GTP + H2O = 7,8-dihydroneopterin 3'-triphosphate + formate + H(+). It participates in cofactor biosynthesis; 7,8-dihydroneopterin triphosphate biosynthesis; 7,8-dihydroneopterin triphosphate from GTP: step 1/1. In Campylobacter jejuni subsp. jejuni serotype O:23/36 (strain 81-176), this protein is GTP cyclohydrolase 1.